The primary structure comprises 182 residues: NADH-quinone oxidoreductase subunit B 2 (182 aa).

Cysteine 55, cysteine 56, cysteine 120, and cysteine 150 together coordinate [4Fe-4S] cluster.

It belongs to the complex I 20 kDa subunit family. As to quaternary structure, NDH-1 is composed of 14 different subunits. Subunits NuoB, C, D, E, F, and G constitute the peripheral sector of the complex. [4Fe-4S] cluster serves as cofactor.

The protein localises to the cell inner membrane. It catalyses the reaction a quinone + NADH + 5 H(+)(in) = a quinol + NAD(+) + 4 H(+)(out). Its function is as follows. NDH-1 shuttles electrons from NADH, via FMN and iron-sulfur (Fe-S) centers, to quinones in the respiratory chain. The immediate electron acceptor for the enzyme in this species is believed to be ubiquinone. Couples the redox reaction to proton translocation (for every two electrons transferred, four hydrogen ions are translocated across the cytoplasmic membrane), and thus conserves the redox energy in a proton gradient. The chain is NADH-quinone oxidoreductase subunit B 2 from Sorangium cellulosum (strain So ce56) (Polyangium cellulosum (strain So ce56)).